The sequence spans 611 residues: Dehydrogenase pkfF (611 aa).

The N-terminal stretch at 1-19 is a signal peptide; the sequence is MRHTALLPLVSSFIVPALA. N-linked (GlcNAc...) asparagine glycosylation is found at asparagine 28 and asparagine 38. FAD contacts are provided by residues 50–51, 71–72, and 137–140; these read TS, EA, and HYMV. Residues asparagine 180, asparagine 187, asparagine 240, asparagine 272, asparagine 409, and asparagine 471 are each glycosylated (N-linked (GlcNAc...) asparagine). Histidine 547 serves as the catalytic Proton acceptor. Residues alanine 581 and 592–593 each bind FAD; that span reads PQ.

This sequence belongs to the GMC oxidoreductase family. FAD is required as a cofactor.

It participates in secondary metabolite biosynthesis. Functionally, dehydrogenase; part of the gene cluster that mediates the biosynthesis of aspernidine A, a prenylated isoindolinone. The starting point of the biosynthesis of aspernidin A is the production of orsellinaldehyde by the non-reducing polyketide synthase pkfA. Hydroxylation, methylation of one of the phenol groups, and prenylation, presumably catalyzed by the prenyltransferase pkfE, would be needed to yield aspernidine D. Subsequently, the cytochrome P450 monooxygenase pkfB is responsible for hydroxylation of aspernidine D to yield aspernidine E. The dehydrogenase pkfF may be responsible for further oxidation of aspernidine E to form a dialdehyde intermediate which is further transformed in a series of steps, some of which are enzyme-mediated, to generate aspernidine A. The possibility that additional enzymes outside of the cluster are involved in aspernidine A biosynthesis cannot be excluded. The protein is Dehydrogenase pkfF of Emericella nidulans (strain FGSC A4 / ATCC 38163 / CBS 112.46 / NRRL 194 / M139) (Aspergillus nidulans).